The following is an 834-amino-acid chain: ATP-dependent 6-phosphofructokinase (834 aa).

Residues 1 to 426 (MTTTSKIIND…FYEIFIACSN (426 aa)) form an N-terminal catalytic PFK domain 1 region. Residues G62, 123–124 (RS), and 153–156 (GDGS) contribute to the ATP site. D154 provides a ligand contact to Mg(2+). Substrate-binding positions include 199–201 (SID), R236, 243–245 (MGR), E299, R326, and 332–335 (HVQR). D201 acts as the Proton acceptor in catalysis. Positions 427–437 (LHRRKVESKGM) are interdomain linker. Residues 438-834 (GVLILHSGGP…DPNVNPQFTL (397 aa)) are C-terminal regulatory PFK domain 2. Beta-D-fructose 2,6-bisphosphate is bound by residues R507, 566 to 570 (TIANN), R603, 610 to 612 (MGA), E666, R692, 698 to 701 (HLQQ), and R764. Positions 799–834 (SNLSEQDRPIKKSDISSPTSYSQKTFDPNVNPQFTL) are disordered. Over residues 803–812 (EQDRPIKKSD) the composition is skewed to basic and acidic residues. Residues 813–834 (ISSPTSYSQKTFDPNVNPQFTL) are compositionally biased toward polar residues.

The protein belongs to the phosphofructokinase type A (PFKA) family. ATP-dependent PFK group I subfamily. Eukaryotic two domain clade 'E' sub-subfamily. In terms of assembly, homotetramer. It depends on Mg(2+) as a cofactor. In terms of processing, the N-terminus is blocked.

The protein localises to the cytoplasm. It catalyses the reaction beta-D-fructose 6-phosphate + ATP = beta-D-fructose 1,6-bisphosphate + ADP + H(+). It functions in the pathway carbohydrate degradation; glycolysis; D-glyceraldehyde 3-phosphate and glycerone phosphate from D-glucose: step 3/4. Allosterically activated by ADP, AMP, or fructose 2,6-bisphosphate, and allosterically inhibited by ATP or citrate. Its function is as follows. Catalyzes the phosphorylation of D-fructose 6-phosphate to fructose 1,6-bisphosphate by ATP, the first committing step of glycolysis. This chain is ATP-dependent 6-phosphofructokinase (pfkA), found in Dictyostelium discoideum (Social amoeba).